Here is a 593-residue protein sequence, read N- to C-terminus: UvrABC system protein C (593 aa).

Residues 17–94 (MEPGCYLMKD…IKQYQPRYNI (78 aa)) form the GIY-YIG domain. Residues 199-234 (KTILKSLEERMLTASESLDFERAKEYRDLIQHIQNL) form the UVR domain.

It belongs to the UvrC family. In terms of assembly, interacts with UvrB in an incision complex.

Its subcellular location is the cytoplasm. In terms of biological role, the UvrABC repair system catalyzes the recognition and processing of DNA lesions. UvrC both incises the 5' and 3' sides of the lesion. The N-terminal half is responsible for the 3' incision and the C-terminal half is responsible for the 5' incision. The chain is UvrABC system protein C from Staphylococcus aureus (strain MRSA252).